A 404-amino-acid polypeptide reads, in one-letter code: MASQVQPGQKPKVQPCRYKTGKTLGAGLYSVVKECVHIDTGQYYAAKVINKRLMVGREHMVRNEIAILKQVSTGHQNILTLVDYFETMNNLYLVTDLALGGELFDRICRKGSYYESDAADLVRAILSAVAYLHDHGIVHRDLKPENLLFRTPEDNADLLIADFGLSRIMDEEQLHVLTTTCGTPGYMAPEIFDKSGHGKPVDIWAIGLITYFMLCGYTPFDRETNLEEVQAIATANFSFTPVEYWRGVSQEARDFIKRCLTVNPKKRMTAHQALQHPWINPPYDTTDDLGSGEDLLPNIKKNFNARRTLHKAIDTVRAINKLRENGGLMMDGIMSVDPKPEHVNGSEVVEDRTTPRERENEDAMEIDSRSNARGQTEQQIREQERKVKETVAGLWSRTAPRSER.

Residues 18 to 279 (YKTGKTLGAG…AHQALQHPWI (262 aa)) form the Protein kinase domain. ATP contacts are provided by residues 24–32 (LGAGLYSVV) and lysine 47. Aspartate 141 functions as the Proton acceptor in the catalytic mechanism. Threonine 179 is subject to Phosphothreonine; by cmkC. The interval 279-322 (INPPYDTTDDLGSGEDLLPNIKKNFNARRTLHKAIDTVRAINKL) is autoinhibitory domain. Residues 301–323 (KNFNARRTLHKAIDTVRAINKLR) are calmodulin-binding. Positions 336–404 (VDPKPEHVNG…WSRTAPRSER (69 aa)) are disordered. Basic and acidic residues-rich tracts occupy residues 338 to 370 (PKPE…DSRS) and 379 to 389 (QIREQERKVKE).

Belongs to the protein kinase superfamily. CAMK Ser/Thr protein kinase family. CaMK subfamily. In terms of processing, phosphorylated by cmkC on Thr-179.

The enzyme catalyses L-seryl-[protein] + ATP = O-phospho-L-seryl-[protein] + ADP + H(+). The catalysed reaction is L-threonyl-[protein] + ATP = O-phospho-L-threonyl-[protein] + ADP + H(+). With respect to regulation, activated by Ca(2+)/calmodulin. Binding of calmodulin results in conformational change that relieves intrasteric autoinhibition and allows phosphorylation of Thr-179 within the activation loop by cmkC. Calcium/calmodulin-dependent protein kinase that operates in the calcium-triggered CaMKK-CaMK1 signaling cascade. Required in G1-phase of the cell cycle for proper timing of the initial nuclear division after germination, but not for subsequent mitoses. Required for the normal temporal regulation of nimX activity. The protein is Calcium/calmodulin-dependent protein kinase cmkB of Emericella nidulans (Aspergillus nidulans).